The following is a 371-amino-acid chain: Transcription factor MYB12 (371 aa).

2 HTH myb-type domains span residues 9–61 and 62–116; these read KVGI…INYL and RSDL…SRKL. 2 consecutive DNA-binding regions (H-T-H motif) follow at residues 37–61 and 89–112; these read WRSL…INYL and WSLI…NSHL. The interval 136-183 is disordered; it reads NASSAPPPPQAKRRLGRTSRSAMKPKIHRTKTRKTKKTSAPPEPNADV. Residues 146–172 are compositionally biased toward basic residues; it reads AKRRLGRTSRSAMKPKIHRTKTRKTKK.

Expressed in stems and flower buds. Expressed in seedlings, roots, cotyledons and apical meristems.

Its subcellular location is the nucleus. Its function is as follows. Flavonol-specific transcription activator involved in the regulation of several genes of flavonoid biosynthesis. Activates the expression of CHS, CHI, F3H and FLS1. Controls flavonol biosynthesis mainly in the root. Confers tolerance to UV-B. This chain is Transcription factor MYB12, found in Arabidopsis thaliana (Mouse-ear cress).